The sequence spans 286 residues: Plasma membrane ascorbate-dependent reductase CYBRD1 (286 aa).

Residues 1–7 (MAMEGYW) lie on the Cytoplasmic side of the membrane. A helical transmembrane segment spans residues 8 to 32 (RFLALLGSALLVGFLSVIFALVWVL). A Cytochrome b561 domain is found at 15 to 220 (SALLVGFLSV…FGALIFWIVT (206 aa)). Residues 33–47 (HYREGLGWDGSALEF) are Extracellular-facing. A helical transmembrane segment spans residues 48-69 (NWHPVLMVTGFVFIQGIAIIVY). Residues histidine 50, arginine 70, and lysine 79 each contribute to the heme b site. Residues 70-78 (RLPWTWKCS) are Cytoplasmic-facing. Residues lysine 79 and lysine 83 each coordinate L-ascorbate. A helical transmembrane segment spans residues 79–105 (KLLMKSIHAGLNAVAAILAIISVVAVF). Histidine 86 contributes to the heme b binding site. Over 106–118 (ENHNVNNIANMYS) the chain is Extracellular. Histidine 108 contributes to the Fe(3+) binding site. Heme b-binding positions include 115–118 (NMYS) and histidine 120. The helical transmembrane segment at 119–144 (LHSWVGLIAVICYLLQLLSGFSVFLL) threads the bilayer. Topologically, residues 145–151 (PWAPLSL) are cytoplasmic. Position 152 (arginine 152) interacts with L-ascorbate. Residues 152–179 (RAFLMPIHVYSGIVIFGTVIATALMGLT) traverse the membrane as a helical segment. Histidine 159 and glutamate 180 together coordinate heme b. The Extracellular portion of the chain corresponds to 180-197 (EKLIFSLRDPAYSTFPPE). The helical transmembrane segment at 198-222 (GVFVNTLGLLILVFGALIFWIVTRP) threads the bilayer. The Cytoplasmic segment spans residues 223–286 (QWKRPKEPNS…LDEAGQRSTM (64 aa)). Heme b is bound at residue lysine 225. Residues 229 to 268 (EPNSTILHPNGGTEQGARGSMPAYSGNNMDKSDSELNSEV) are disordered. Residue serine 232 is modified to Phosphoserine. At threonine 285 the chain carries Phosphothreonine.

As to quaternary structure, homodimer. The cofactor is heme b. In terms of tissue distribution, present in erythrocyte membranes (at protein level). Also expressed in respiratory epithelium.

The protein resides in the cell membrane. It is found in the apical cell membrane. It carries out the reaction Fe(3+)(out) + L-ascorbate(in) = monodehydro-L-ascorbate radical(in) + Fe(2+)(out) + H(+). It catalyses the reaction Cu(2+)(out) + L-ascorbate(in) = Cu(+)(out) + monodehydro-L-ascorbate radical(in) + H(+). The catalysed reaction is monodehydro-L-ascorbate radical(out) + L-ascorbate(in) = monodehydro-L-ascorbate radical(in) + L-ascorbate(out). Its activity is regulated as follows. Activated by chelators like citrate, malate, and oxalate specially at alkaline pH. Functionally, plasma membrane reductase that uses cytoplasmic ascorbate as an electron donor to reduce extracellular Fe(3+) into Fe(2+). Probably functions in dietary iron absorption at the brush border of duodenal enterocytes by producing Fe(2+), the divalent form of iron that can be transported into enterocytes. It is also able to reduce extracellular monodehydro-L-ascorbate and may be involved in extracellular ascorbate regeneration by erythrocytes in blood. May also act as a ferrireductase in airway epithelial cells. May also function as a cupric transmembrane reductase. In Homo sapiens (Human), this protein is Plasma membrane ascorbate-dependent reductase CYBRD1.